We begin with the raw amino-acid sequence, 470 residues long: Pre-mycofactocin glycosyltransferase (470 aa).

Residues 315–335 (LVISGGALMAWILMSIGTGLG) traverse the membrane as a helical segment.

Belongs to the glycosyltransferase 2 family.

It is found in the cell membrane. Involved in the biosynthesis of the enzyme cofactor mycofactocin (MFT). Acts as a glycosyltransferase that catalyzes the oligoglycosylation of pre-mycofactocin (PMFT), adding up to nine beta-1,4-linked glucose residues. Is required for the in vivo ethanol assimilation in M.smegmatis. This is Pre-mycofactocin glycosyltransferase (mftF) from Mycobacterium tuberculosis (strain CDC 1551 / Oshkosh).